The following is a 150-amino-acid chain: 6,7-dimethyl-8-ribityllumazine synthase (150 aa).

Residues Phe11, 43–45 (VFD), and 67–69 (AVI) each bind 5-amino-6-(D-ribitylamino)uracil. (2S)-2-hydroxy-3-oxobutyl phosphate is bound at residue 72–73 (AT). The active-site Proton donor is the His75. Residue Leu100 participates in 5-amino-6-(D-ribitylamino)uracil binding. Residue Arg115 participates in (2S)-2-hydroxy-3-oxobutyl phosphate binding.

It belongs to the DMRL synthase family.

It carries out the reaction (2S)-2-hydroxy-3-oxobutyl phosphate + 5-amino-6-(D-ribitylamino)uracil = 6,7-dimethyl-8-(1-D-ribityl)lumazine + phosphate + 2 H2O + H(+). Its pathway is cofactor biosynthesis; riboflavin biosynthesis; riboflavin from 2-hydroxy-3-oxobutyl phosphate and 5-amino-6-(D-ribitylamino)uracil: step 1/2. Catalyzes the formation of 6,7-dimethyl-8-ribityllumazine by condensation of 5-amino-6-(D-ribitylamino)uracil with 3,4-dihydroxy-2-butanone 4-phosphate. This is the penultimate step in the biosynthesis of riboflavin. The chain is 6,7-dimethyl-8-ribityllumazine synthase from Pyrobaculum calidifontis (strain DSM 21063 / JCM 11548 / VA1).